A 239-amino-acid polypeptide reads, in one-letter code: Myogenic factor 6 (239 aa).

The tract at residues 28–64 (HLDMSGVSPLYNGNDSPLSPGQDNVPSETGGESSGDE) is disordered. Over residues 38–58 (YNGNDSPLSPGQDNVPSETGG) the composition is skewed to polar residues. Positions 96 to 147 (DRRKAATLRERRRLKKINEAFDALKRKTVANPNQRLPKVEILRSAISYIERL) constitute a bHLH domain. Residues 155-189 (DEQERSQSGASDTRNDKEQNRPSGGDYRWKKASNT) form a disordered region.

Efficient DNA binding requires dimerization with another bHLH protein.

The protein resides in the nucleus. Involved in muscle differentiation (myogenic factor). Induces fibroblasts to differentiate into myoblasts. Probable sequence specific DNA-binding protein. The polypeptide is Myogenic factor 6 (myf6) (Takifugu rubripes (Japanese pufferfish)).